A 176-amino-acid polypeptide reads, in one-letter code: Woronin body major protein (176 aa).

Residues 1–16 constitute a propeptide that is removed on maturation; sequence MGYYDDDAHGHVEADA. Basic and acidic residues predominate over residues 1–16; sequence MGYYDDDAHGHVEADA. Residues 1-31 are disordered; that stretch reads MGYYDDDAHGHVEADAAPRATTGTGTGSASQ. A Microbody targeting signal motif is present at residues 174-176; that stretch reads SRL.

This sequence belongs to the eIF-5A family. Hex1 subfamily. As to quaternary structure, forms oligomers. Self-assembles into hexagonal rods.

It localises to the cell septum. Major component of Woronin bodies, fungal-specific organelles that occlude septal pores in order to separate intact from damaged compartments. Hex-1 binds directly or indirectly to the Woronin body tether that in turn is anchored at the rim of the septal pore. The chain is Woronin body major protein from Neurospora crassa (strain ATCC 24698 / 74-OR23-1A / CBS 708.71 / DSM 1257 / FGSC 987).